The following is a 220-amino-acid chain: Cell division protein SepF (220 aa).

The disordered stretch occupies residues 1–120 (MAIKDAFNKM…RREQYQHAAH (120 aa)). The segment covering 26 to 35 (LSSKKQEEPV) has biased composition (basic and acidic residues). Positions 39-79 (QQTSRPNQQQQAARASQPQQPKQARPQMQAQQRPQSQSRAA) are enriched in low complexity. Residues 93–102 (VSHDYNDRRA) show a composition bias toward basic and acidic residues.

This sequence belongs to the SepF family. Homodimer. Interacts with FtsZ.

The protein localises to the cytoplasm. Functionally, cell division protein that is part of the divisome complex and is recruited early to the Z-ring. Probably stimulates Z-ring formation, perhaps through the cross-linking of FtsZ protofilaments. Its function overlaps with FtsA. The protein is Cell division protein SepF of Streptococcus equi subsp. equi (strain 4047).